A 308-amino-acid polypeptide reads, in one-letter code: Atrochrysone carboxyl ACP thioesterase (308 aa).

Residues His99, His101, Asp103, and His104 each contribute to the Zn(2+) site. Asp103 acts as the Proton donor/acceptor in catalysis.

It belongs to the metallo-beta-lactamase superfamily. It depends on Zn(2+) as a cofactor.

It catalyses the reaction atrochrysone carboxyl-[ACP] + H2O = atrochrysone carboxylate + holo-[ACP] + H(+). Its pathway is secondary metabolite biosynthesis. Atrochrysone carboxyl ACP thioesterase; part of the gene cluster that mediates the biosynthesis of physcion, a natural anthraquinone fungicide that can prevent plant fungal infections. The pathway begins with the polyketide synthase AcPKS that condenses 8 malonyl-CoA units to synthesize atrochrysone thioester which is released from the synthase by the atrochrysone carboxyl ACP thioesterase AcTE that breaks the thioester bond and leads to free atrochrysone carboxylic acid. Spontaneous decarboxylation of atrochrysone carboxylic acid leads to the formation of atrochrysone. Then, atrochrysone undergoes spontaneous dehydration and oxidation, giving the products emodin anthrone and emodin. The O-methyltransferase AcOMT then methylates the C-6 hydroxyl of emodin to form physcion. The chain is Atrochrysone carboxyl ACP thioesterase from Aspergillus chevalieri (Eurotium chevalieri).